The chain runs to 602 residues: Threonine--tRNA ligase (602 aa).

The segment at aspartate 208–proline 499 is catalytic. The Zn(2+) site is built by cysteine 300, histidine 351, and histidine 476.

Belongs to the class-II aminoacyl-tRNA synthetase family. As to quaternary structure, homodimer. Requires Zn(2+) as cofactor.

It localises to the cytoplasm. The catalysed reaction is tRNA(Thr) + L-threonine + ATP = L-threonyl-tRNA(Thr) + AMP + diphosphate + H(+). Catalyzes the attachment of threonine to tRNA(Thr) in a two-step reaction: L-threonine is first activated by ATP to form Thr-AMP and then transferred to the acceptor end of tRNA(Thr). Also edits incorrectly charged L-seryl-tRNA(Thr). In Campylobacter jejuni (strain RM1221), this protein is Threonine--tRNA ligase.